Reading from the N-terminus, the 393-residue chain is Sugar efflux transporter A (393 aa).

The next 12 helical transmembrane spans lie at 22 to 42 (VIAFLTGIAGALQLPTLSLFL), 51 to 71 (FMVGLFYTGSAVIGIVVSQIL), 82 to 102 (KTLILQCCLLGALACLLYAWN), 107 to 127 (VLLFIGVLLSSFGSTANPQLF), 152 to 172 (ISLSWVIGPPVAFALALGFGF), 174 to 194 (AMYLTAAVVFVLCGLLVWLLL), 219 to 239 (LLLFTACTLMWTCNGIYLINM), 253 to 273 (LAGVMMGTAAGLEIPVMLLAG), 287 to 307 (LAVIAGLIFYTGLTLLNGSWA), 308 to 328 (LLALQLLNAIFIGILAGMGML), 344 to 364 (LFTNTTRVGWIISGSLAGIVA), and 366 to 386 (VWSYHAGFVIAIAMLAGAAVC).

The protein belongs to the major facilitator superfamily. Set transporter family.

It localises to the cell inner membrane. In terms of biological role, involved in the efflux of sugars. The physiological role may be the reduction of the intracellular concentration of toxic sugars or sugar metabolites. Transports IPTG, lactose and arabinose. The chain is Sugar efflux transporter A (sotA) from Dickeya chrysanthemi (Pectobacterium chrysanthemi).